Reading from the N-terminus, the 430-residue chain is Histidinol dehydrogenase (430 aa).

Residues tyrosine 130, glutamine 191, and asparagine 214 each contribute to the NAD(+) site. Serine 237, glutamine 259, and histidine 262 together coordinate substrate. Zn(2+) contacts are provided by glutamine 259 and histidine 262. Catalysis depends on proton acceptor residues glutamate 327 and histidine 328. The substrate site is built by histidine 328, aspartate 361, glutamate 415, and histidine 420. Position 361 (aspartate 361) interacts with Zn(2+). Histidine 420 lines the Zn(2+) pocket.

It belongs to the histidinol dehydrogenase family. Zn(2+) serves as cofactor.

It catalyses the reaction L-histidinol + 2 NAD(+) + H2O = L-histidine + 2 NADH + 3 H(+). The protein operates within amino-acid biosynthesis; L-histidine biosynthesis; L-histidine from 5-phospho-alpha-D-ribose 1-diphosphate: step 9/9. In terms of biological role, catalyzes the sequential NAD-dependent oxidations of L-histidinol to L-histidinaldehyde and then to L-histidine. This is Histidinol dehydrogenase from Brucella abortus (strain 2308).